The sequence spans 385 residues: O-phospho-L-seryl-tRNA:Cys-tRNA synthase (385 aa).

Pyridoxal 5'-phosphate contacts are provided by residues 89–90 (AR), N195, and 218–220 (SGH). An N6-(pyridoxal phosphate)lysine modification is found at K221.

It belongs to the SepCysS family. In terms of assembly, homodimer. Interacts with SepRS. It depends on pyridoxal 5'-phosphate as a cofactor.

It catalyses the reaction O-phospho-L-seryl-tRNA(Cys) + hydrogen sulfide + H(+) = L-cysteinyl-tRNA(Cys) + phosphate. In terms of biological role, converts O-phospho-L-seryl-tRNA(Cys) (Sep-tRNA(Cys)) to L-cysteinyl-tRNA(Cys) (Cys-tRNA(Cys)). The polypeptide is O-phospho-L-seryl-tRNA:Cys-tRNA synthase (Methanococcus aeolicus (strain ATCC BAA-1280 / DSM 17508 / OCM 812 / Nankai-3)).